The following is a 113-amino-acid chain: Retrotransposon Gag-like protein 8 (113 aa).

The protein belongs to the FAM127 family.

This chain is Retrotransposon Gag-like protein 8 (RTL8A), found in Bos taurus (Bovine).